A 317-amino-acid chain; its full sequence is Aspartate carbamoyltransferase catalytic subunit (317 aa).

Carbamoyl phosphate contacts are provided by arginine 64 and threonine 65. Lysine 92 contributes to the L-aspartate binding site. The carbamoyl phosphate site is built by arginine 114, histidine 144, and glutamine 147. L-aspartate is bound by residues arginine 177 and arginine 232. The carbamoyl phosphate site is built by glycine 273 and proline 274.

This sequence belongs to the aspartate/ornithine carbamoyltransferase superfamily. ATCase family. Heterododecamer (2C3:3R2) of six catalytic PyrB chains organized as two trimers (C3), and six regulatory PyrI chains organized as three dimers (R2).

The catalysed reaction is carbamoyl phosphate + L-aspartate = N-carbamoyl-L-aspartate + phosphate + H(+). It functions in the pathway pyrimidine metabolism; UMP biosynthesis via de novo pathway; (S)-dihydroorotate from bicarbonate: step 2/3. Catalyzes the condensation of carbamoyl phosphate and aspartate to form carbamoyl aspartate and inorganic phosphate, the committed step in the de novo pyrimidine nucleotide biosynthesis pathway. This is Aspartate carbamoyltransferase catalytic subunit from Thiobacillus denitrificans (strain ATCC 25259 / T1).